Here is a 226-residue protein sequence, read N- to C-terminus: Thiamine-phosphate synthase (226 aa).

Residues 46–50 (QFRDK) and Asp-83 contribute to the 4-amino-2-methyl-5-(diphosphooxymethyl)pyrimidine site. Positions 84 and 103 each coordinate Mg(2+). Ser-122 is a binding site for 4-amino-2-methyl-5-(diphosphooxymethyl)pyrimidine. Position 149 to 151 (149 to 151 (TQS)) interacts with 2-[(2R,5Z)-2-carboxy-4-methylthiazol-5(2H)-ylidene]ethyl phosphate. Lys-152 serves as a coordination point for 4-amino-2-methyl-5-(diphosphooxymethyl)pyrimidine. 2-[(2R,5Z)-2-carboxy-4-methylthiazol-5(2H)-ylidene]ethyl phosphate is bound by residues Gly-181 and 201–202 (IT).

It belongs to the thiamine-phosphate synthase family. It depends on Mg(2+) as a cofactor.

The catalysed reaction is 2-[(2R,5Z)-2-carboxy-4-methylthiazol-5(2H)-ylidene]ethyl phosphate + 4-amino-2-methyl-5-(diphosphooxymethyl)pyrimidine + 2 H(+) = thiamine phosphate + CO2 + diphosphate. It carries out the reaction 2-(2-carboxy-4-methylthiazol-5-yl)ethyl phosphate + 4-amino-2-methyl-5-(diphosphooxymethyl)pyrimidine + 2 H(+) = thiamine phosphate + CO2 + diphosphate. It catalyses the reaction 4-methyl-5-(2-phosphooxyethyl)-thiazole + 4-amino-2-methyl-5-(diphosphooxymethyl)pyrimidine + H(+) = thiamine phosphate + diphosphate. The protein operates within cofactor biosynthesis; thiamine diphosphate biosynthesis; thiamine phosphate from 4-amino-2-methyl-5-diphosphomethylpyrimidine and 4-methyl-5-(2-phosphoethyl)-thiazole: step 1/1. In terms of biological role, condenses 4-methyl-5-(beta-hydroxyethyl)thiazole monophosphate (THZ-P) and 2-methyl-4-amino-5-hydroxymethyl pyrimidine pyrophosphate (HMP-PP) to form thiamine monophosphate (TMP). The protein is Thiamine-phosphate synthase of Haemophilus influenzae (strain ATCC 51907 / DSM 11121 / KW20 / Rd).